Here is a 175-residue protein sequence, read N- to C-terminus: Orotate phosphoribosyltransferase (175 aa).

5-phospho-alpha-D-ribose 1-diphosphate-binding positions include Arg-88, Lys-89, Lys-92, and 114–122 (EDVVTTARG). The orotate site is built by Thr-118 and Arg-146.

This sequence belongs to the purine/pyrimidine phosphoribosyltransferase family. PyrE subfamily. Homodimer. Mg(2+) serves as cofactor.

The catalysed reaction is orotidine 5'-phosphate + diphosphate = orotate + 5-phospho-alpha-D-ribose 1-diphosphate. It participates in pyrimidine metabolism; UMP biosynthesis via de novo pathway; UMP from orotate: step 1/2. In terms of biological role, catalyzes the transfer of a ribosyl phosphate group from 5-phosphoribose 1-diphosphate to orotate, leading to the formation of orotidine monophosphate (OMP). The sequence is that of Orotate phosphoribosyltransferase from Methanocella arvoryzae (strain DSM 22066 / NBRC 105507 / MRE50).